Consider the following 337-residue polypeptide: Glucokinase (337 aa).

11-16 provides a ligand contact to ATP; sequence ADIGGT.

The protein belongs to the bacterial glucokinase family.

The protein localises to the cytoplasm. It carries out the reaction D-glucose + ATP = D-glucose 6-phosphate + ADP + H(+). This chain is Glucokinase, found in Xylella fastidiosa (strain M12).